Here is a 244-residue protein sequence, read N- to C-terminus: DNA repair protein RecO (244 aa).

The protein belongs to the RecO family.

Its function is as follows. Involved in DNA repair and RecF pathway recombination. The protein is DNA repair protein RecO of Myxococcus xanthus (strain DK1622).